We begin with the raw amino-acid sequence, 635 residues long: Probable potassium transport system protein Kup (635 aa).

A run of 12 helical transmembrane segments spans residues 20–40, 62–82, 111–131, 149–169, 180–200, 223–243, 259–279, 292–312, 349–369, 377–397, 408–428, and 429–449; these read MALVIGAIGVVFGDIGTSPLY, VLSLAFWALMITVTLKYVTII, AYVVGILGIFGASLFFGDGVI, PSLHPFIVPITVVVLLVVFMV, VFGPITCLWFLSLGAIGIWNI, GWHGVFILGAVVLAVTGGEAL, WYFFVLPMLLLNYLGQGALVL, AVPSWALYPMIILATLAAVIA, IYVPGINWLLMVMVIALVLIF, VAYGISVSMTMLIDTLLLALV, WVLPLCVVFFIIELAFVIANG, and AKLLQGAWFPLALGIVVFTLM.

This sequence belongs to the HAK/KUP transporter (TC 2.A.72) family.

It localises to the cell inner membrane. It carries out the reaction K(+)(in) + H(+)(in) = K(+)(out) + H(+)(out). Its function is as follows. Transport of potassium into the cell. Likely operates as a K(+):H(+) symporter. The protein is Probable potassium transport system protein Kup of Xanthomonas campestris pv. campestris (strain 8004).